The primary structure comprises 273 residues: Mediator of RNA polymerase II transcription subunit 18 (273 aa).

Residues Gly90–Ser106 are compositionally biased toward low complexity. The disordered stretch occupies residues Gly90–Phe114.

Belongs to the Mediator complex subunit 18 family. In terms of assembly, component of the Mediator complex.

It localises to the nucleus. Functionally, component of the Mediator complex, a coactivator involved in the regulated transcription of nearly all RNA polymerase II-dependent genes. Mediator functions as a bridge to convey information from gene-specific regulatory proteins to the basal RNA polymerase II transcription machinery. Mediator is recruited to promoters by direct interactions with regulatory proteins and serves as a scaffold for the assembly of a functional preinitiation complex with RNA polymerase II and the general transcription factors. This is Mediator of RNA polymerase II transcription subunit 18 (srb5) from Aspergillus oryzae (strain ATCC 42149 / RIB 40) (Yellow koji mold).